The following is a 218-amino-acid chain: Small ribosomal subunit protein uS3 (218 aa).

The 69-residue stretch at 38-106 (IREYINKRLQ…REHINIVEIK (69 aa)) folds into the KH type-2 domain.

This sequence belongs to the universal ribosomal protein uS3 family. Part of the 30S ribosomal subunit. Forms a tight complex with proteins S10 and S14.

Binds the lower part of the 30S subunit head. Binds mRNA in the 70S ribosome, positioning it for translation. The protein is Small ribosomal subunit protein uS3 of Geobacillus stearothermophilus (Bacillus stearothermophilus).